A 342-amino-acid chain; its full sequence is Heat-inducible transcription repressor HrcA (342 aa).

The protein belongs to the HrcA family.

Functionally, negative regulator of class I heat shock genes (grpE-dnaK-dnaJ and groELS operons). Prevents heat-shock induction of these operons. This chain is Heat-inducible transcription repressor HrcA, found in Dechloromonas aromatica (strain RCB).